Reading from the N-terminus, the 330-residue chain is MARGELMKKLLASYGRDEDFRAVAEQIIDEEEKKNNRVLARTLRKTLEAGPQRTQSAPKALAPLIPFPEAAADFVERIEPEHNRNDIVLSAANVRVLLGLVKEFRRADEIRQHGLKVRSKMLFCGPPGCGKTLCAEIFAAELGLPLFRVKLDRLISSYLGETATNIRKTFEFARKQPCVLFFDEFDALARTRDDSGEHNELRRVVNSLLLFIDNMQPKGFLIAATNLDRSLDAAIWRRFDEVLWFDRPEAAMIGRFLKLKFKNVPVAFDPARNSAALEGYSFAEIERVCTQAIKAMIIERRKQVQERDFNRALQDEARRRAGQARLAPMI.

125-132 (GPPGCGKT) lines the ATP pocket.

Belongs to the AAA ATPase family.

This is an uncharacterized protein from Sinorhizobium fredii (strain NBRC 101917 / NGR234).